A 529-amino-acid chain; its full sequence is All-trans-zeta-carotene desaturase (529 aa).

12–45 (IVVGAGPGGLSAAINLAGQGFRVTVVEKDAVPGG) is an FAD binding site.

The protein belongs to the carotenoid/retinoid oxidoreductase family. It depends on FAD as a cofactor.

The enzyme catalyses all-trans-zeta-carotene + 2 A = all-trans-lycopene + 2 AH2. It functions in the pathway carotenoid biosynthesis; lycopene biosynthesis. Dehydrogenates carotenes in the trans conformation: converts all-trans-zeta-carotene into all-trans-lycopene, one of the last dehydrogenation steps of lycopene biosynthesis. The chain is All-trans-zeta-carotene desaturase (carC) from Myxococcus xanthus.